A 337-amino-acid polypeptide reads, in one-letter code: Phenylalanine--tRNA ligase alpha subunit (337 aa).

E252 contributes to the Mg(2+) binding site.

The protein belongs to the class-II aminoacyl-tRNA synthetase family. Phe-tRNA synthetase alpha subunit type 1 subfamily. In terms of assembly, tetramer of two alpha and two beta subunits. Mg(2+) serves as cofactor.

The protein resides in the cytoplasm. It carries out the reaction tRNA(Phe) + L-phenylalanine + ATP = L-phenylalanyl-tRNA(Phe) + AMP + diphosphate + H(+). The protein is Phenylalanine--tRNA ligase alpha subunit of Cellvibrio japonicus (strain Ueda107) (Pseudomonas fluorescens subsp. cellulosa).